The chain runs to 484 residues: ATP synthase subunit beta (484 aa).

162–169 (GGAGVGKT) lines the ATP pocket.

Belongs to the ATPase alpha/beta chains family. F-type ATPases have 2 components, CF(1) - the catalytic core - and CF(0) - the membrane proton channel. CF(1) has five subunits: alpha(3), beta(3), gamma(1), delta(1), epsilon(1). CF(0) has three main subunits: a(1), b(2) and c(9-12). The alpha and beta chains form an alternating ring which encloses part of the gamma chain. CF(1) is attached to CF(0) by a central stalk formed by the gamma and epsilon chains, while a peripheral stalk is formed by the delta and b chains.

It is found in the cell inner membrane. It catalyses the reaction ATP + H2O + 4 H(+)(in) = ADP + phosphate + 5 H(+)(out). In terms of biological role, produces ATP from ADP in the presence of a proton gradient across the membrane. The catalytic sites are hosted primarily by the beta subunits. The polypeptide is ATP synthase subunit beta (Agrobacterium fabrum (strain C58 / ATCC 33970) (Agrobacterium tumefaciens (strain C58))).